Reading from the N-terminus, the 54-residue chain is Putative neurotoxin-I (54 aa).

Intrachain disulfides connect Cys20–Cys42, Cys28–Cys51, and Cys32–Cys53.

As to expression, expressed by the venom gland.

The protein resides in the secreted. This chain is Putative neurotoxin-I, found in Lychas mucronatus (Chinese swimming scorpion).